The primary structure comprises 423 residues: Inactive autotransporter heptosyltransferase BimC (423 aa).

The span at Met1–Ala10 shows a compositional bias: polar residues. The disordered stretch occupies residues Met1–Pro49. 4 residues coordinate Fe(3+): Cys371, Cys374, Cys390, and Cys402.

Belongs to the glycosyltransferase 9 family. Homotrimer or homotetramer. It depends on Fe(3+) as a cofactor.

The protein localises to the cell inner membrane. It is found in the cytoplasm. In terms of biological role, iron-binding protein which is required for the asymmetric polar distribution of the autotransporter BimA on the bacterial surface prior to its translocation into bacterial periplasm. Lacks heptosyltransferase activity. This is Inactive autotransporter heptosyltransferase BimC from Burkholderia thailandensis (strain ATCC 700388 / DSM 13276 / CCUG 48851 / CIP 106301 / E264).